A 100-amino-acid polypeptide reads, in one-letter code: uncharacterized protein (100 aa).

The next 2 helical transmembrane spans lie at 30–50 (FHIP…PLAF) and 69–89 (FLLI…LPFF).

The protein resides in the cytoplasm. Its subcellular location is the nucleus membrane. This is an uncharacterized protein from Schizosaccharomyces pombe (strain 972 / ATCC 24843) (Fission yeast).